The sequence spans 906 residues: Coatomer subunit beta' (906 aa).

WD repeat units lie at residues 13–52 (ARSDRVKSVDLHPTEPWMLASLYNGSVCVWNHETQTLVKT), 55–94 (VCDLPVRAAKFVARKNWVVTGADDMQIRVFNYNTLERVHM), 97–136 (AHSDYIRCIAVHPTQPFILTSSDDMLIKLWDWDKKWSCSQ), 140–180 (GHTH…PNFT), 183–224 (GHEK…CVQT), 227–266 (GHAQNVSCASFHPELPIIITGSEDGTVRIWHSSTYRLEST), 350–388 (SCEIYPQTIQHNPNGRFVVVCGDGEYIIYTAMALRNKSF), and 390–425 (SAQEFAWAHDSSEYAIRESNSIVKIFKNFKEKKSFK). Residue Lys-627 is modified to N6-acetyllysine. The WD 9 repeat unit spans residues 746 to 783 (IRTGRLPEAAFLARTYLPSQVSRVVKLWRENLSKVNQK). The tract at residues 837 to 863 (EEAKGFQPSRSTAQQELDGKPASPTPV) is disordered. Phosphoserine is present on Ser-859. Thr-861 is subject to Phosphothreonine. Positions 866 to 890 (ASHTANKEEKSLLELEVDLDNLELV) form a coiled coil.

The protein belongs to the WD repeat COPB2 family. As to quaternary structure, oligomeric complex that consists of at least the alpha, beta, beta', gamma, delta, epsilon and zeta subunits. Probably interacts with PEX11A. Interacts with SCYL1. Interacts with JAGN1.

It is found in the cytoplasm. Its subcellular location is the cytosol. The protein resides in the golgi apparatus membrane. It localises to the cytoplasmic vesicle. The protein localises to the COPI-coated vesicle membrane. The coatomer is a cytosolic protein complex that binds to dilysine motifs and reversibly associates with Golgi non-clathrin-coated vesicles, which further mediate biosynthetic protein transport from the ER, via the Golgi up to the trans Golgi network. Coatomer complex is required for budding from Golgi membranes, and is essential for the retrograde Golgi-to-ER transport of dilysine-tagged proteins. In mammals, the coatomer can only be recruited by membranes associated to ADP-ribosylation factors (ARFs), which are small GTP-binding proteins; the complex also influences the Golgi structural integrity, as well as the processing, activity, and endocytic recycling of LDL receptors. Its function is as follows. This coatomer complex protein, essential for Golgi budding and vesicular trafficking, is a selective binding protein (RACK) for protein kinase C, epsilon type. It binds to Golgi membranes in a GTP-dependent manner. This chain is Coatomer subunit beta' (COPB2), found in Pongo abelii (Sumatran orangutan).